The primary structure comprises 180 residues: Large ribosomal subunit protein uL5 (180 aa).

Belongs to the universal ribosomal protein uL5 family. In terms of assembly, part of the 50S ribosomal subunit; part of the 5S rRNA/L5/L18/L25 subcomplex. Contacts the 5S rRNA and the P site tRNA. Forms a bridge to the 30S subunit in the 70S ribosome.

Its function is as follows. This is one of the proteins that bind and probably mediate the attachment of the 5S RNA into the large ribosomal subunit, where it forms part of the central protuberance. In the 70S ribosome it contacts protein S13 of the 30S subunit (bridge B1b), connecting the 2 subunits; this bridge is implicated in subunit movement. Contacts the P site tRNA; the 5S rRNA and some of its associated proteins might help stabilize positioning of ribosome-bound tRNAs. The polypeptide is Large ribosomal subunit protein uL5 (Chlamydia trachomatis serovar A (strain ATCC VR-571B / DSM 19440 / HAR-13)).